A 154-amino-acid chain; its full sequence is Crossover junction endodeoxyribonuclease RuvC (154 aa).

Active-site residues include Asp-7, Glu-67, and Asp-139. 3 residues coordinate Mg(2+): Asp-7, Glu-67, and Asp-139.

It belongs to the RuvC family. In terms of assembly, homodimer which binds Holliday junction (HJ) DNA. The HJ becomes 2-fold symmetrical on binding to RuvC with unstacked arms; it has a different conformation from HJ DNA in complex with RuvA. In the full resolvosome a probable DNA-RuvA(4)-RuvB(12)-RuvC(2) complex forms which resolves the HJ. Requires Mg(2+) as cofactor.

It is found in the cytoplasm. The enzyme catalyses Endonucleolytic cleavage at a junction such as a reciprocal single-stranded crossover between two homologous DNA duplexes (Holliday junction).. Its function is as follows. The RuvA-RuvB-RuvC complex processes Holliday junction (HJ) DNA during genetic recombination and DNA repair. Endonuclease that resolves HJ intermediates. Cleaves cruciform DNA by making single-stranded nicks across the HJ at symmetrical positions within the homologous arms, yielding a 5'-phosphate and a 3'-hydroxyl group; requires a central core of homology in the junction. The consensus cleavage sequence is 5'-(A/T)TT(C/G)-3'. Cleavage occurs on the 3'-side of the TT dinucleotide at the point of strand exchange. HJ branch migration catalyzed by RuvA-RuvB allows RuvC to scan DNA until it finds its consensus sequence, where it cleaves and resolves the cruciform DNA. The sequence is that of Crossover junction endodeoxyribonuclease RuvC from Synechococcus sp. (strain CC9902).